A 545-amino-acid chain; its full sequence is Tyrosine decarboxylase 2 (545 aa).

A compositionally biased stretch (gly residues) spans Gly23–Asn44. The interval Gly23–Gly45 is disordered. Positions 245 and 360 each coordinate L-tyrosine. Lys361 carries the post-translational modification N6-(pyridoxal phosphate)lysine. Tyr390 is a binding site for L-tyrosine.

This sequence belongs to the group II decarboxylase family. As to quaternary structure, homotetramer. Pyridoxal 5'-phosphate serves as cofactor. In terms of tissue distribution, expressed specifically in flowers.

The protein resides in the cytoplasm. The enzyme catalyses L-tyrosine + H(+) = tyramine + CO2. Its function is as follows. Converts tyrosine into tyramine, a precursor of isoquinoline alkaloids and various amides. The chain is Tyrosine decarboxylase 2 from Arabidopsis thaliana (Mouse-ear cress).